The primary structure comprises 121 residues: Small ribosomal subunit protein uS13 (121 aa).

Positions 92-121 are disordered; the sequence is RKGLPVRGQSSKTNARTVKGPRKTVANKKK. Basic residues predominate over residues 110–121; sequence KGPRKTVANKKK.

The protein belongs to the universal ribosomal protein uS13 family. As to quaternary structure, part of the 30S ribosomal subunit. Forms a loose heterodimer with protein S19. Forms two bridges to the 50S subunit in the 70S ribosome.

Functionally, located at the top of the head of the 30S subunit, it contacts several helices of the 16S rRNA. In the 70S ribosome it contacts the 23S rRNA (bridge B1a) and protein L5 of the 50S subunit (bridge B1b), connecting the 2 subunits; these bridges are implicated in subunit movement. Contacts the tRNAs in the A and P-sites. The sequence is that of Small ribosomal subunit protein uS13 from Mycoplasma mycoides subsp. mycoides SC (strain CCUG 32753 / NCTC 10114 / PG1).